Consider the following 1569-residue polypeptide: Pentafunctional AROM polypeptide (1569 aa).

A 3-dehydroquinate synthase region spans residues 1–382 (MAEAKKPGPE…HEPRASVVDD (382 aa)). NAD(+) is bound by residues 49-51 (DTN), 84-87 (EASK), 115-117 (GGV), and Asp120. Arg131 is a 7-phospho-2-dehydro-3-deoxy-D-arabino-heptonate binding site. 140-141 (TT) lines the NAD(+) pocket. Residues Asp147 and Lys153 each coordinate 7-phospho-2-dehydro-3-deoxy-D-arabino-heptonate. Lys162 lines the NAD(+) pocket. Residue Asn163 coordinates 7-phospho-2-dehydro-3-deoxy-D-arabino-heptonate. NAD(+) is bound by residues 180-183 (FLET) and Asn191. Residue Glu195 participates in Zn(2+) binding. Residues 195–198 (EVVK) and Lys248 each bind 7-phospho-2-dehydro-3-deoxy-D-arabino-heptonate. The active-site Proton acceptor; for 3-dehydroquinate synthase activity is Glu258. 7-phospho-2-dehydro-3-deoxy-D-arabino-heptonate is bound by residues 262 to 266 (RNLLN) and His269. His269 lines the Zn(2+) pocket. His273 serves as the catalytic Proton acceptor; for 3-dehydroquinate synthase activity. Positions 285 and 354 each coordinate 7-phospho-2-dehydro-3-deoxy-D-arabino-heptonate. His285 contacts Zn(2+). The segment at 395-837 (VTPGVPSNLD…WDILSQAFKV (443 aa)) is EPSP synthase. Cys819 (for EPSP synthase activity) is an active-site residue. Residues 859–1053 (ERSVFIIGMR…MEKDHSFFVS (195 aa)) are shikimate kinase. An ATP-binding site is contributed by 866-873 (GMRGAGKT). The 3-dehydroquinase stretch occupies residues 1054-1267 (LTVPDVSEAA…AAPGQMSAAE (214 aa)). Catalysis depends on His1170, which acts as the Proton acceptor; for 3-dehydroquinate dehydratase activity. Lys1198 acts as the Schiff-base intermediate with substrate; for 3-dehydroquinate dehydratase activity in catalysis. The segment at 1280 to 1569 (PCNFYLFGKP…RDARSAVLGL (290 aa)) is shikimate dehydrogenase.

The protein in the N-terminal section; belongs to the sugar phosphate cyclases superfamily. Dehydroquinate synthase family. This sequence in the 2nd section; belongs to the EPSP synthase family. In the 3rd section; belongs to the shikimate kinase family. It in the 4th section; belongs to the type-I 3-dehydroquinase family. The protein in the C-terminal section; belongs to the shikimate dehydrogenase family. As to quaternary structure, homodimer. The cofactor is Zn(2+).

Its subcellular location is the cytoplasm. It catalyses the reaction 7-phospho-2-dehydro-3-deoxy-D-arabino-heptonate = 3-dehydroquinate + phosphate. It carries out the reaction 3-dehydroquinate = 3-dehydroshikimate + H2O. The enzyme catalyses shikimate + NADP(+) = 3-dehydroshikimate + NADPH + H(+). The catalysed reaction is shikimate + ATP = 3-phosphoshikimate + ADP + H(+). It catalyses the reaction 3-phosphoshikimate + phosphoenolpyruvate = 5-O-(1-carboxyvinyl)-3-phosphoshikimate + phosphate. The protein operates within metabolic intermediate biosynthesis; chorismate biosynthesis; chorismate from D-erythrose 4-phosphate and phosphoenolpyruvate: step 2/7. It functions in the pathway metabolic intermediate biosynthesis; chorismate biosynthesis; chorismate from D-erythrose 4-phosphate and phosphoenolpyruvate: step 3/7. Its pathway is metabolic intermediate biosynthesis; chorismate biosynthesis; chorismate from D-erythrose 4-phosphate and phosphoenolpyruvate: step 4/7. It participates in metabolic intermediate biosynthesis; chorismate biosynthesis; chorismate from D-erythrose 4-phosphate and phosphoenolpyruvate: step 5/7. The protein operates within metabolic intermediate biosynthesis; chorismate biosynthesis; chorismate from D-erythrose 4-phosphate and phosphoenolpyruvate: step 6/7. Functionally, the AROM polypeptide catalyzes 5 consecutive enzymatic reactions in prechorismate polyaromatic amino acid biosynthesis. This chain is Pentafunctional AROM polypeptide, found in Fusarium vanettenii (strain ATCC MYA-4622 / CBS 123669 / FGSC 9596 / NRRL 45880 / 77-13-4) (Fusarium solani subsp. pisi).